A 230-amino-acid polypeptide reads, in one-letter code: Large ribosomal subunit protein uL1 (230 aa).

The protein belongs to the universal ribosomal protein uL1 family. In terms of assembly, part of the 50S ribosomal subunit.

Binds directly to 23S rRNA. The L1 stalk is quite mobile in the ribosome, and is involved in E site tRNA release. In terms of biological role, protein L1 is also a translational repressor protein, it controls the translation of the L11 operon by binding to its mRNA. The protein is Large ribosomal subunit protein uL1 of Bifidobacterium longum subsp. infantis (strain ATCC 15697 / DSM 20088 / JCM 1222 / NCTC 11817 / S12).